The following is a 448-amino-acid chain: Phosphoglucosamine mutase (448 aa).

Catalysis depends on Ser-100, which acts as the Phosphoserine intermediate. Positions 100, 240, 242, and 244 each coordinate Mg(2+). Residue Ser-100 is modified to Phosphoserine.

This sequence belongs to the phosphohexose mutase family. Mg(2+) serves as cofactor. Activated by phosphorylation.

It catalyses the reaction alpha-D-glucosamine 1-phosphate = D-glucosamine 6-phosphate. Catalyzes the conversion of glucosamine-6-phosphate to glucosamine-1-phosphate. The protein is Phosphoglucosamine mutase of Clostridium perfringens (strain SM101 / Type A).